Here is a 204-residue protein sequence, read N- to C-terminus: MIGRLQGILLEKQPPEILLNVQGVGYELLLPMTSFYDLPEIGQETTLFTHLVVREDAHLLFGFAQKTDRTLFRELIKTNGVGPKLALAILSAMSVEQFAYAIEREELSKLTKIPGVGKKTAERLLVELKGKFKGIKQSDFFVESTHIPLSPSIESHSESSSDEAISALIALGYKPAEAEKMVKRVAKPELTSEQVIREALKAAL.

The domain I stretch occupies residues 1–64 (MIGRLQGILL…EDAHLLFGFA (64 aa)). The interval 65 to 143 (QKTDRTLFRE…GIKQSDFFVE (79 aa)) is domain II. The interval 144-155 (STHIPLSPSIES) is flexible linker. The tract at residues 156–204 (HSESSSDEAISALIALGYKPAEAEKMVKRVAKPELTSEQVIREALKAAL) is domain III.

It belongs to the RuvA family. Homotetramer. Forms an RuvA(8)-RuvB(12)-Holliday junction (HJ) complex. HJ DNA is sandwiched between 2 RuvA tetramers; dsDNA enters through RuvA and exits via RuvB. An RuvB hexamer assembles on each DNA strand where it exits the tetramer. Each RuvB hexamer is contacted by two RuvA subunits (via domain III) on 2 adjacent RuvB subunits; this complex drives branch migration. In the full resolvosome a probable DNA-RuvA(4)-RuvB(12)-RuvC(2) complex forms which resolves the HJ.

The protein resides in the cytoplasm. Its function is as follows. The RuvA-RuvB-RuvC complex processes Holliday junction (HJ) DNA during genetic recombination and DNA repair, while the RuvA-RuvB complex plays an important role in the rescue of blocked DNA replication forks via replication fork reversal (RFR). RuvA specifically binds to HJ cruciform DNA, conferring on it an open structure. The RuvB hexamer acts as an ATP-dependent pump, pulling dsDNA into and through the RuvAB complex. HJ branch migration allows RuvC to scan DNA until it finds its consensus sequence, where it cleaves and resolves the cruciform DNA. This Haemophilus influenzae (strain 86-028NP) protein is Holliday junction branch migration complex subunit RuvA.